Here is a 119-residue protein sequence, read N- to C-terminus: uncharacterized protein (119 aa).

The chain crosses the membrane as a helical span at residues 74-91 (LSVHFLLNVISAILSMLI).

It localises to the membrane. This is an uncharacterized protein from Schizosaccharomyces pombe (strain 972 / ATCC 24843) (Fission yeast).